Reading from the N-terminus, the 387-residue chain is Phosphoglycerate kinase (387 aa).

Substrate is bound by residues Asp-21–Asn-23, Arg-36, and His-59–Arg-62. At Lys-84 the chain carries N6-acetyllysine. 2 residues coordinate substrate: Arg-113 and Arg-146. ATP is bound by residues Lys-197, Glu-314, and Gly-340 to Thr-343.

This sequence belongs to the phosphoglycerate kinase family. In terms of assembly, monomer.

Its subcellular location is the cytoplasm. It carries out the reaction (2R)-3-phosphoglycerate + ATP = (2R)-3-phospho-glyceroyl phosphate + ADP. Its pathway is carbohydrate degradation; glycolysis; pyruvate from D-glyceraldehyde 3-phosphate: step 2/5. In Escherichia coli O157:H7, this protein is Phosphoglycerate kinase (pgk).